The following is a 295-amino-acid chain: MDTEKLMKAGEIAKKVREKAIKLARPGMLLLELAESIEKMIMELGGKPAFPVNLSINEIAAHYTPYKGDTTVLKEGDYLKIDVGVHIDGFIADTAVTVRVGMEEDELMEAAKEALNAAISVARAGVEIKELGKAIENEIRKRGFKPIVNLSGHKIERYKLHAGISIPNIYRPHDNYVLKEGDVFAIEPFATIGAGQVIEVPPTLIYMYVRDVPVRVAQARFLLAKIKREYGTLPFAYRWLQNDMPEGQLKLALKTLEKAGAIYGYPVLKEIRNGIVAQFEHTIIVEKDSVIVTTE.

Position 62 (histidine 62) interacts with substrate. A divalent metal cation-binding residues include aspartate 82, aspartate 93, and histidine 153. Position 161 (histidine 161) interacts with substrate. A divalent metal cation is bound by residues glutamate 187 and glutamate 280.

Monomer. Co(2+) is required as a cofactor. The cofactor is Zn(2+). Requires Mn(2+) as cofactor. It depends on Fe(2+) as a cofactor.

The enzyme catalyses Release of N-terminal amino acids, preferentially methionine, from peptides and arylamides.. In terms of biological role, removes the N-terminal methionine from nascent proteins. The N-terminal methionine is often cleaved when the second residue in the primary sequence is small and uncharged (Met-Ala-, Cys, Gly, Pro, Ser, Thr, or Val). This chain is Methionine aminopeptidase, found in Pyrococcus furiosus (strain ATCC 43587 / DSM 3638 / JCM 8422 / Vc1).